Consider the following 359-residue polypeptide: Methylthioribose-1-phosphate isomerase (359 aa).

Substrate contacts are provided by residues 50–52 (RGA), arginine 93, and glutamine 200. The active-site Proton donor is the aspartate 241. Residue 251 to 252 (NK) participates in substrate binding.

This sequence belongs to the eIF-2B alpha/beta/delta subunits family. MtnA subfamily.

It carries out the reaction 5-(methylsulfanyl)-alpha-D-ribose 1-phosphate = 5-(methylsulfanyl)-D-ribulose 1-phosphate. It participates in amino-acid biosynthesis; L-methionine biosynthesis via salvage pathway; L-methionine from S-methyl-5-thio-alpha-D-ribose 1-phosphate: step 1/6. Its function is as follows. Catalyzes the interconversion of methylthioribose-1-phosphate (MTR-1-P) into methylthioribulose-1-phosphate (MTRu-1-P). This is Methylthioribose-1-phosphate isomerase from Symbiobacterium thermophilum (strain DSM 24528 / JCM 14929 / IAM 14863 / T).